The primary structure comprises 569 residues: Proline--tRNA ligase (569 aa).

It belongs to the class-II aminoacyl-tRNA synthetase family. ProS type 1 subfamily. As to quaternary structure, homodimer.

The protein resides in the cytoplasm. It carries out the reaction tRNA(Pro) + L-proline + ATP = L-prolyl-tRNA(Pro) + AMP + diphosphate. Its function is as follows. Catalyzes the attachment of proline to tRNA(Pro) in a two-step reaction: proline is first activated by ATP to form Pro-AMP and then transferred to the acceptor end of tRNA(Pro). As ProRS can inadvertently accommodate and process non-cognate amino acids such as alanine and cysteine, to avoid such errors it has two additional distinct editing activities against alanine. One activity is designated as 'pretransfer' editing and involves the tRNA(Pro)-independent hydrolysis of activated Ala-AMP. The other activity is designated 'posttransfer' editing and involves deacylation of mischarged Ala-tRNA(Pro). The misacylated Cys-tRNA(Pro) is not edited by ProRS. This chain is Proline--tRNA ligase, found in Dehalococcoides mccartyi (strain CBDB1).